We begin with the raw amino-acid sequence, 101 residues long: Small ribosomal subunit protein uS14 (101 aa).

Belongs to the universal ribosomal protein uS14 family. As to quaternary structure, part of the 30S ribosomal subunit. Contacts proteins S3 and S10.

Functionally, binds 16S rRNA, required for the assembly of 30S particles and may also be responsible for determining the conformation of the 16S rRNA at the A site. The sequence is that of Small ribosomal subunit protein uS14 from Orientia tsutsugamushi (strain Boryong) (Rickettsia tsutsugamushi).